The chain runs to 346 residues: Elongation factor Ts (346 aa).

The tract at residues threonine 80–valine 83 is involved in Mg(2+) ion dislocation from EF-Tu.

This sequence belongs to the EF-Ts family.

The protein resides in the cytoplasm. In terms of biological role, associates with the EF-Tu.GDP complex and induces the exchange of GDP to GTP. It remains bound to the aminoacyl-tRNA.EF-Tu.GTP complex up to the GTP hydrolysis stage on the ribosome. In Streptococcus pneumoniae serotype 19F (strain G54), this protein is Elongation factor Ts.